Reading from the N-terminus, the 652-residue chain is Type III restriction-modification enzyme StyLTI Mod subunit (652 aa).

A binding of S-adenosyl methionine region spans residues 135-138; sequence DPPY.

It belongs to the N(4)/N(6)-methyltransferase family. In terms of assembly, homodimer, also forms a functional restriction-competent complex with Res.

The enzyme catalyses a 2'-deoxyadenosine in DNA + S-adenosyl-L-methionine = an N(6)-methyl-2'-deoxyadenosine in DNA + S-adenosyl-L-homocysteine + H(+). In terms of biological role, a beta subtype methylase that binds the system-specific DNA recognition site 5'-CAGAG-3' and methylates A-4 (of only 1 strand as the other does not have an A residue). DNA restriction requires both the Res and Mod subunits. This Salmonella typhimurium (strain LT2 / SGSC1412 / ATCC 700720) protein is Type III restriction-modification enzyme StyLTI Mod subunit.